The chain runs to 171 residues: uncharacterized protein (171 aa).

Disordered regions lie at residues 27–53 (DCPG…KMVL) and 82–108 (GHLE…PSSS). Residues 32 to 50 (GNNNREPSISTRGRTSSSK) are compositionally biased toward polar residues.

This is an uncharacterized protein from Homo sapiens (Human).